The chain runs to 101 residues: Small ribosomal subunit protein uS14 (101 aa).

This sequence belongs to the universal ribosomal protein uS14 family. Part of the 30S ribosomal subunit. Contacts proteins S3 and S10.

In terms of biological role, binds 16S rRNA, required for the assembly of 30S particles and may also be responsible for determining the conformation of the 16S rRNA at the A site. In Salmonella paratyphi A (strain ATCC 9150 / SARB42), this protein is Small ribosomal subunit protein uS14.